Reading from the N-terminus, the 386-residue chain is MYSVLKQSIRPRLLATHNQFRTMITAQAVLYTQHGEPKDVLFTQSFEIDDDNLAPNEVIVKTLGSPVNPSDINQIQGVYPSKPAKTTGFGTTEPAAPCGNEGLFEVIKVGSNVSSLEAGDWVIPSHVNFGTWRTHALGNDDDFIKLPNPAQSKANGKPNGLTINQGATISVNPLTAYLMLTHYVKLTPGKDWFIQNGGTSAVGKYASQIGKLLNFNSISVIRDRPNLDEVVASLKELGATQVITEDQNNSREFGPTIKEWIKQSGGEAKLALNCVGGKSSTGIARKLNNNGLMLTYGGMSFQPVTIPTSLYIFKNFTSAGFWVTELLKNNKELKTSTLNQIIAWYEEGKLTDAKSIETLYDGTKPLHELYQDGVANSKDGKQLITY.

A mitochondrion-targeting transit peptide spans 1–22; the sequence is MYSVLKQSIRPRLLATHNQFRT. Residue Tyr79 is the Proton donor of the active site. NADP(+) is bound by residues Asn172, 199–202, 222–224, 296–299, 321–323, and Lys381; these read TSAV, RDR, YGGM, and FWV.

It belongs to the zinc-containing alcohol dehydrogenase family. Quinone oxidoreductase subfamily. As to quaternary structure, homodimer and heterodimer with ETR2.

The protein resides in the mitochondrion. The enzyme catalyses a 2,3-saturated acyl-[ACP] + NADP(+) = a (2E)-enoyl-[ACP] + NADPH + H(+). It carries out the reaction (2E,4E)-hexadienoyl-CoA + NADPH + H(+) = (4E)-hexenoyl-CoA + NADP(+). The catalysed reaction is (2E)-hexenoyl-CoA + NADPH + H(+) = hexanoyl-CoA + NADP(+). Catalyzes the NADPH-dependent reduction of trans-2-enoyl thioesters in mitochondrial fatty acid synthesis (fatty acid synthesis type II). Fatty acid chain elongation in mitochondria uses acyl carrier protein (ACP) as an acyl group carrier, but the enzyme accepts both ACP and CoA thioesters as substrates in vitro. Required for respiration and the maintenance of the mitochondrial compartment. This chain is Enoyl-[acyl-carrier-protein] reductase 1, mitochondrial (ETR1), found in Candida tropicalis (Yeast).